The sequence spans 122 residues: Small ribosomal subunit protein uS13 (122 aa).

Residues 97-122 (PVRGQRTHTNARTRKGPARAIAGKKK) form a disordered region.

This sequence belongs to the universal ribosomal protein uS13 family. In terms of assembly, part of the 30S ribosomal subunit. Forms a loose heterodimer with protein S19. Forms two bridges to the 50S subunit in the 70S ribosome.

Located at the top of the head of the 30S subunit, it contacts several helices of the 16S rRNA. In the 70S ribosome it contacts the 23S rRNA (bridge B1a) and protein L5 of the 50S subunit (bridge B1b), connecting the 2 subunits; these bridges are implicated in subunit movement. Contacts the tRNAs in the A and P-sites. This chain is Small ribosomal subunit protein uS13, found in Bartonella bacilliformis (strain ATCC 35685 / KC583 / Herrer 020/F12,63).